Reading from the N-terminus, the 230-residue chain is LexA repressor (230 aa).

The tract at residues 1-21 (MSDDSSETRTGGRRGADAGLT) is disordered. Positions 44-64 (IREIGDAVGLTSTSSVAHQLR) form a DNA-binding region, H-T-H motif. Catalysis depends on for autocatalytic cleavage activity residues Ser-154 and Lys-191.

It belongs to the peptidase S24 family. As to quaternary structure, homodimer.

The enzyme catalyses Hydrolysis of Ala-|-Gly bond in repressor LexA.. In terms of biological role, represses a number of genes involved in the response to DNA damage (SOS response), including recA and lexA. In the presence of single-stranded DNA, RecA interacts with LexA causing an autocatalytic cleavage which disrupts the DNA-binding part of LexA, leading to derepression of the SOS regulon and eventually DNA repair. The polypeptide is LexA repressor (Mycobacterium sp. (strain JLS)).